Consider the following 148-residue polypeptide: UPF0756 membrane protein YeaL (148 aa).

4 helical membrane passes run 14–34 (ALGFISHNTTVAVSILVLIIV), 51–71 (LSIGIIILTIGVMAPIASGTL), 86–106 (LVAIAVGVIVSWLGGRGVTLM), and 112–132 (LVAGLLVGTVLGVALFRGVPV).

It belongs to the UPF0756 family.

The protein localises to the cell membrane. The protein is UPF0756 membrane protein YeaL of Escherichia coli O157:H7.